The sequence spans 216 residues: Urease accessory protein UreG (216 aa).

GTP is bound at residue 25 to 32 (GPVGSGKT).

The protein belongs to the SIMIBI class G3E GTPase family. UreG subfamily. In terms of assembly, homodimer. UreD, UreF and UreG form a complex that acts as a GTP-hydrolysis-dependent molecular chaperone, activating the urease apoprotein by helping to assemble the nickel containing metallocenter of UreC. The UreE protein probably delivers the nickel.

The protein localises to the cytoplasm. Its function is as follows. Facilitates the functional incorporation of the urease nickel metallocenter. This process requires GTP hydrolysis, probably effectuated by UreG. The protein is Urease accessory protein UreG of Burkholderia mallei (strain NCTC 10247).